Reading from the N-terminus, the 556-residue chain is Testis-specific protein 10-interacting protein (556 aa).

Residues 1-16 are compositionally biased toward polar residues; sequence MGQDTDMLNTYQQLVR. Disordered stretches follow at residues 1 to 31, 50 to 102, 123 to 155, and 179 to 309; these read MGQD…LQAP, GCLG…LLPR, LQPS…ANLP, and GGVS…QWRK. A compositionally biased stretch (polar residues) spans 208 to 219; the sequence is GSASDKQVQLQS. Over residues 244 to 258 the composition is skewed to acidic residues; the sequence is SEEEQFSEATEEAEE. Over residues 289–301 the composition is skewed to polar residues; that stretch reads QGQSQGSSPSFNN. Residues 379–464 are a coiled coil; sequence RQEATRSLLQ…LQGIQHRVQA (86 aa). Positions 503–556 are disordered; sequence AGKVDREGTPRKPRSHRSMGVRMEHSPQRPPRTEPTGSQPDRHYNPSLDPECSP.

The chain is Testis-specific protein 10-interacting protein (TSGA10IP) from Homo sapiens (Human).